The primary structure comprises 340 residues: DNA-directed RNA polymerase subunit alpha (340 aa).

An alpha N-terminal domain (alpha-NTD) region spans residues 1–236 (MLSLSKNWNT…EQLQLFISFE (236 aa)). The interval 246–340 (TDALPFSPYL…LSNRYEDSYN (95 aa)) is alpha C-terminal domain (alpha-CTD).

It belongs to the RNA polymerase alpha chain family. Homodimer. The RNAP catalytic core consists of 2 alpha, 1 beta, 1 beta' and 1 omega subunit. When a sigma factor is associated with the core the holoenzyme is formed, which can initiate transcription.

The enzyme catalyses RNA(n) + a ribonucleoside 5'-triphosphate = RNA(n+1) + diphosphate. Its function is as follows. DNA-dependent RNA polymerase catalyzes the transcription of DNA into RNA using the four ribonucleoside triphosphates as substrates. The polypeptide is DNA-directed RNA polymerase subunit alpha (Rickettsia felis (strain ATCC VR-1525 / URRWXCal2) (Rickettsia azadi)).